A 138-amino-acid chain; its full sequence is ATP synthase epsilon chain (138 aa).

The protein belongs to the ATPase epsilon chain family. F-type ATPases have 2 components, CF(1) - the catalytic core - and CF(0) - the membrane proton channel. CF(1) has five subunits: alpha(3), beta(3), gamma(1), delta(1), epsilon(1). CF(0) has three main subunits: a, b and c.

It localises to the cell inner membrane. Functionally, produces ATP from ADP in the presence of a proton gradient across the membrane. This chain is ATP synthase epsilon chain, found in Idiomarina loihiensis (strain ATCC BAA-735 / DSM 15497 / L2-TR).